A 381-amino-acid polypeptide reads, in one-letter code: Alanine racemase, catabolic (381 aa).

Lysine 55 functions as the Proton acceptor; specific for D-alanine in the catalytic mechanism. Position 55 is an N6-(pyridoxal phosphate)lysine (lysine 55). Arginine 154 is a substrate binding site. Catalysis depends on tyrosine 276, which acts as the Proton acceptor; specific for L-alanine. Methionine 322 contributes to the substrate binding site.

The protein belongs to the alanine racemase family. The cofactor is pyridoxal 5'-phosphate.

It catalyses the reaction L-alanine = D-alanine. Its function is as follows. Isomerizes L-alanine to D-alanine which is then oxidized to pyruvate by DadA. The protein is Alanine racemase, catabolic (dadB) of Mesorhizobium japonicum (strain LMG 29417 / CECT 9101 / MAFF 303099) (Mesorhizobium loti (strain MAFF 303099)).